Reading from the N-terminus, the 201-residue chain is Glycerol-3-phosphate acyltransferase (201 aa).

4 consecutive transmembrane segments (helical) span residues 4-24, 84-104, 116-136, and 157-177; these read IASLVLAYLLGSVPFAVLVSL, EIAMVGLAVFIGHLWPVFLAF, VLLAVNPWLALIAAAVWLAVA, and AWFIEPGVYAGLTIVIALLLV.

It belongs to the PlsY family. Probably interacts with PlsX.

It localises to the cell inner membrane. It catalyses the reaction an acyl phosphate + sn-glycerol 3-phosphate = a 1-acyl-sn-glycero-3-phosphate + phosphate. It participates in lipid metabolism; phospholipid metabolism. In terms of biological role, catalyzes the transfer of an acyl group from acyl-phosphate (acyl-PO(4)) to glycerol-3-phosphate (G3P) to form lysophosphatidic acid (LPA). This enzyme utilizes acyl-phosphate as fatty acyl donor, but not acyl-CoA or acyl-ACP. The sequence is that of Glycerol-3-phosphate acyltransferase from Laribacter hongkongensis (strain HLHK9).